Here is a 1462-residue protein sequence, read N- to C-terminus: Copper-transporting ATPase 2 (1462 aa).

The disordered stretch occupies residues 1–23 (MDPRKNLASVGTMPEQERQVTAK). The Cytoplasmic segment spans residues 1 to 655 (MDPRKNLASV…KTEIKQWKKS (655 aa)). 4 HMA domains span residues 68–134 (ATDV…FEAS), 153–219 (AVVK…FEAA), 267–333 (ATLP…PGHF), and 361–427 (RTAV…FEVS). Cu(+) is bound by residues Cys-79, Cys-82, Cys-164, Cys-167, Cys-278, and Cys-281. Positions 333–361 (FKVSLPDGVEENEPQSGSSQRHQEQGPGR) are disordered. Residue Cys-372 coordinates Cu(+). A disordered region spans residues 460–487 (KMAPDTRGLPTHQGPGHSSETPSSPGAT). Residues 475–487 (GHSSETPSSPGAT) show a composition bias toward polar residues. 2 positions are modified to phosphoserine: Ser-478 and Ser-483. HMA domains are found at residues 490-556 (QKCF…FEAS) and 566-632 (GDIE…FHAS). 4 residues coordinate Cu(+): Cys-501, Cys-504, Cys-577, and Cys-580. The chain crosses the membrane as a helical span at residues 656–677 (FLCSLVFGIPVMGLMVYMLIPS). Topologically, residues 678–699 (STPQETMVLDHNIIPGLSVLNL) are extracellular. Residues 700-719 (IFFILCTFVQFLGGWYFYVQ) form a helical membrane-spanning segment. The Cytoplasmic segment spans residues 720–726 (AYKSLRH). A helical membrane pass occupies residues 727 to 747 (RSANMDVLIVLATTIAYAYSL). Residues 748–766 (VILVVAVAEKAEKSPVTFF) lie on the Extracellular side of the membrane. Residues 767–787 (DTPPMLFVFIALGRWLEHVAK) traverse the membrane as a helical segment. Residues 788–921 (SKTSEALAKL…KAPIQQLADR (134 aa)) lie on the Cytoplasmic side of the membrane. The chain crosses the membrane as a helical span at residues 922-944 (FSGYFVPFIIIISTLTLVVWIVI). Over 945–974 (GFVDFGVVQKYFPSPSKHISQTEVIIRFAF) the chain is Extracellular. Residues 975-996 (QTSITVLCIACPCSLGLATPTA) traverse the membrane as a helical segment. Residues 997-1319 (VMVGTGVAAQ…LSKRTVRRIR (323 aa)) are Cytoplasmic-facing. Asp-1029 (4-aspartylphosphate intermediate) is an active-site residue. 2 residues coordinate Mg(2+): Asp-1264 and Asp-1268. A helical transmembrane segment spans residues 1320–1337 (VNLVLALIYNMVGIPIAA). Residues 1338–1348 (GVFMPIGIVLQ) lie on the Extracellular side of the membrane. A helical membrane pass occupies residues 1349–1368 (PWMGSAAMAASSVSVVLSSL). Topologically, residues 1369 to 1462 (QLKCYRKPDL…LSDRDEEQCI (94 aa)) are cytoplasmic. 2 positions are modified to phosphoserine: Ser-1395 and Ser-1454.

It belongs to the cation transport ATPase (P-type) (TC 3.A.3) family. Type IB subfamily. Monomer. Interacts with COMMD1/MURR1. Interacts with DCTN4, in a copper-dependent manner. Interacts with ATOX1. Interacts (via C-terminus) with ZBTB16/PLZF. In terms of tissue distribution, detected in liver and kidney.

The protein localises to the golgi apparatus. It is found in the trans-Golgi network membrane. It localises to the late endosome. It catalyses the reaction Cu(+)(in) + ATP + H2O = Cu(+)(out) + ADP + phosphate + H(+). In terms of biological role, copper ion transmembrane transporter involved in the export of copper out of the cells, such as the efflux of hepatic copper into the bile. The sequence is that of Copper-transporting ATPase 2 (Atp7b) from Mus musculus (Mouse).